A 239-amino-acid chain; its full sequence is MICOS complex subunit mic25a (239 aa).

Gly2 carries the N-myristoyl glycine lipid modification. Disordered stretches follow at residues Val27–Tyr88 and Asp113–Lys133. The segment covering Asn50–Pro78 has biased composition (polar residues). The segment covering Asp79–Tyr88 has biased composition (basic and acidic residues). Positions Asp79 to Glu166 form a coiled coil. One can recognise a CHCH domain in the interval Glu192 to Leu234. Short sequence motifs (cx9C motif) lie at residues Cys195 to Cys205 and Cys216 to Cys226. 2 cysteine pairs are disulfide-bonded: Cys195–Cys226 and Cys205–Cys216.

Belongs to the MICOS complex subunit Mic19 family. Metazoan Mic25 subfamily. Component of the mitochondrial contact site and cristae organizing system (MICOS) complex (also known as MINOS or MitOS complex).

It localises to the mitochondrion inner membrane. In terms of biological role, component of the MICOS complex, a large protein complex of the mitochondrial inner membrane that plays crucial roles in the maintenance of crista junctions, inner membrane architecture, and formation of contact sites to the outer membrane. The protein is MICOS complex subunit mic25a (chchd6a) of Danio rerio (Zebrafish).